A 507-amino-acid chain; its full sequence is Carboxypeptidase sxa2 (507 aa).

An N-terminal signal peptide occupies residues 1-22; sequence MLSLFLKSLFAIIIIELTIIHA. 2 N-linked (GlcNAc...) asparagine glycosylation sites follow: Asn-38 and Asn-45. The tract at residues 41 to 64 is disordered; the sequence is SASSNQTVQPRQHAAPSSDRIKSL. Residue Ser-200 is part of the active site. N-linked (GlcNAc...) asparagine glycosylation is found at Asn-259, Asn-260, and Asn-300. The active site involves Asp-434. Asn-448 carries an N-linked (GlcNAc...) asparagine glycan. His-487 is an active-site residue.

This sequence belongs to the peptidase S10 family.

Its subcellular location is the secreted. Its function is as follows. Involved in degradation or processing of the mating pheromones. Its loss causes a persistent response to the pheromones. It may be required for stabilization of enzymes that are essential for zygote formation. May degrade the mating pheromone P-factor. The sequence is that of Carboxypeptidase sxa2 (sxa2) from Schizosaccharomyces pombe (strain 972 / ATCC 24843) (Fission yeast).